We begin with the raw amino-acid sequence, 103 residues long: Integration host factor subunit beta (103 aa).

Positions arginine 62 to lysine 81 are disordered.

Belongs to the bacterial histone-like protein family. As to quaternary structure, heterodimer of an alpha and a beta chain.

Functionally, this protein is one of the two subunits of integration host factor, a specific DNA-binding protein that functions in genetic recombination as well as in transcriptional and translational control. This chain is Integration host factor subunit beta, found in Xanthomonas axonopodis pv. citri (strain 306).